The following is a 512-amino-acid chain: Peroxisomal N(1)-acetyl-spermine/spermidine oxidase (512 aa).

Residue M1 is modified to N-acetylmethionine. The propeptide occupies 1-6 (MQSGGR). Residues A25, E46, R54, and 70-71 (HW) each bind FAD. Substrate contacts are provided by H73 and V195. V248 contacts FAD. N321 provides a ligand contact to substrate. FAD contacts are provided by residues E473 and 482–483 (TT). Positions 510–512 (PRL) match the Microbody targeting signal motif.

It belongs to the flavin monoamine oxidase family. As to quaternary structure, monomer. Requires FAD as cofactor.

It localises to the peroxisome. It is found in the cytoplasm. It catalyses the reaction N(1)-acetylspermine + O2 + H2O = 3-acetamidopropanal + spermidine + H2O2. It carries out the reaction N(1)-acetylspermidine + O2 + H2O = 3-acetamidopropanal + putrescine + H2O2. The catalysed reaction is N(1),N(12)-diacetylspermine + O2 + H2O = 3-acetamidopropanal + N(1)-acetylspermidine + H2O2. The protein operates within amine and polyamine metabolism; spermine metabolism. Its function is as follows. Flavoenzyme which catalyzes the oxidation of N(1)-acetylspermine to spermidine and is thus involved in the polyamine back-conversion. Can also oxidize N(1)-acetylspermidine to putrescine. Substrate specificity: N(1)-acetylspermine = N(1)-acetylspermidine &gt; N(1),N(12)-diacylspermine &gt;&gt; spermine. Does not oxidize spermidine. Plays an important role in the regulation of polyamine intracellular concentration. This chain is Peroxisomal N(1)-acetyl-spermine/spermidine oxidase (PAOX), found in Bos taurus (Bovine).